The sequence spans 87 residues: Putative sodium channel toxin Ts38 (87 aa).

The first 22 residues, 1–22, serve as a signal peptide directing secretion; that stretch reads MKHLKFYSILFLFSIFVYKVNA. Disulfide bonds link Cys42–Cys65, Cys51–Cys72, and Cys55–Cys74.

This sequence belongs to the long (3 C-C) scorpion toxin superfamily. Sodium channel inhibitor family. In terms of tissue distribution, expressed by the venom gland.

The protein localises to the secreted. Putative sodium channel toxin. The sequence is that of Putative sodium channel toxin Ts38 from Tityus serrulatus (Brazilian scorpion).